The following is a 416-amino-acid chain: Interleukin-1 receptor type 2 (416 aa).

The N-terminal stretch at 1 to 13 is a signal peptide; that stretch reads MFILLVLVTGVSA. At 14–355 the chain is on the extracellular side; the sequence is FTTPAVVHTG…FQSLHTTVKE (342 aa). Ig-like C2-type domains follow at residues 29 to 136, 146 to 233, and 249 to 357; these read PVTS…LELK, PLVS…YNIT, and PVII…KEVS. 3 cysteine pairs are disulfide-bonded: Cys42-Cys128, Cys64-Cys120, and Cys164-Cys219. N-linked (GlcNAc...) asparagine glycosylation is found at Asn124, Asn208, Asn231, and Asn289. Cys270 and Cys338 are joined by a disulfide. A helical membrane pass occupies residues 356–381; sequence VSSTFSWGIALAPLSLIILVVGAIWI. At 382–416 the chain is on the cytoplasmic side; that stretch reads RRRCKRQAGKTYGLTKLPTDNQDFPSSPNQIKEMK. The segment at 396–416 is disordered; it reads TKLPTDNQDFPSSPNQIKEMK. A compositionally biased stretch (polar residues) spans 399–416; the sequence is PTDNQDFPSSPNQIKEMK.

The protein belongs to the interleukin-1 receptor family. Associates with IL1RAP to form a non-signaling interleukin-1 receptor complex. A soluble form (sIL1R2) can also be produced by proteolytic cleavage at the cell surface (shedding) involving a metalloproteinase.

It is found in the membrane. Its subcellular location is the cell membrane. The protein resides in the secreted. Non-signaling receptor for IL1A, IL1B and IL1RN. Reduces IL1B activities. Serves as a decoy receptor by competitive binding to IL1B and preventing its binding to IL1R1. Also modulates cellular response through non-signaling association with IL1RAP after binding to IL1B. IL1R2 (membrane and secreted forms) preferentially binds IL1B and poorly IL1A and IL1RN. The secreted IL1R2 recruits secreted IL1RAP with high affinity; this complex formation may be the dominant mechanism for neutralization of IL1B by secreted/soluble receptors. This is Interleukin-1 receptor type 2 (Il1r2) from Rattus norvegicus (Rat).